Here is a 25-residue protein sequence, read N- to C-terminus: Antimicrobial peptide 3 (25 aa).

As to expression, skin.

Its subcellular location is the secreted. Functionally, has antibacterial activity against Gram-positive bacterium S.aureus and Gram-negative bacterium E.coli, when in combination with XT1 and XT6. The polypeptide is Antimicrobial peptide 3 (Xenopus tropicalis (Western clawed frog)).